Reading from the N-terminus, the 424-residue chain is Probable methyltransferase EP424R (424 aa).

In terms of domain architecture, Adrift-type SAM-dependent 2'-O-MTase spans 103–315 (QIVTNAWLKM…TYIVGKNRLR (213 aa)). Residues Gly135 and Asp228 each coordinate S-adenosyl-L-methionine. Residue Lys268 is the Proton acceptor of the active site.

It is found in the virion. The protein is Probable methyltransferase EP424R of Ornithodoros (relapsing fever ticks).